The sequence spans 300 residues: tRNA dimethylallyltransferase (300 aa).

11 to 18 (GPTAVGKS) lines the ATP pocket. Substrate is bound at residue 13 to 18 (TAVGKS). Positions 35-38 (DSIQ) are interaction with substrate tRNA.

Belongs to the IPP transferase family. As to quaternary structure, monomer. Mg(2+) serves as cofactor.

It catalyses the reaction adenosine(37) in tRNA + dimethylallyl diphosphate = N(6)-dimethylallyladenosine(37) in tRNA + diphosphate. In terms of biological role, catalyzes the transfer of a dimethylallyl group onto the adenine at position 37 in tRNAs that read codons beginning with uridine, leading to the formation of N6-(dimethylallyl)adenosine (i(6)A). The protein is tRNA dimethylallyltransferase of Borrelia turicatae (strain 91E135).